A 283-amino-acid chain; its full sequence is Ribosomal RNA small subunit methyltransferase A (283 aa).

6 residues coordinate S-adenosyl-L-methionine: asparagine 29, leucine 31, glycine 56, glutamate 77, aspartate 102, and asparagine 123.

This sequence belongs to the class I-like SAM-binding methyltransferase superfamily. rRNA adenine N(6)-methyltransferase family. RsmA subfamily.

The protein localises to the cytoplasm. It catalyses the reaction adenosine(1518)/adenosine(1519) in 16S rRNA + 4 S-adenosyl-L-methionine = N(6)-dimethyladenosine(1518)/N(6)-dimethyladenosine(1519) in 16S rRNA + 4 S-adenosyl-L-homocysteine + 4 H(+). Functionally, specifically dimethylates two adjacent adenosines (A1518 and A1519) in the loop of a conserved hairpin near the 3'-end of 16S rRNA in the 30S particle. May play a critical role in biogenesis of 30S subunits. In Acidobacterium capsulatum (strain ATCC 51196 / DSM 11244 / BCRC 80197 / JCM 7670 / NBRC 15755 / NCIMB 13165 / 161), this protein is Ribosomal RNA small subunit methyltransferase A.